We begin with the raw amino-acid sequence, 201 residues long: Twist-related protein 1 (201 aa).

The span at 1–18 (MMQDVSSSPVSPADDSLS) shows a compositional bias: low complexity. The disordered stretch occupies residues 1–106 (MMQDVSSSPV…GGGSPQSYEE (106 aa)). The segment covering 34 to 43 (RGGRKRRSSR) has biased composition (basic residues). 2 stretches are compositionally biased toward gly residues: residues 46–65 (AGGG…GGDE) and 80–100 (GCGG…GGGS). A bHLH domain is found at 109–160 (TQRVMANVRERQRTQSLNEAFAALPKIIPTLPSDKLSKIQTLKLAARYIDFL). Residues 162–190 (QVLQSDELDSKMASYVAHERLSYAFSVWR) are sufficient for transactivation activity.

As to quaternary structure, efficient DNA binding requires dimerization with another bHLH protein. Homodimer or heterodimer with E proteins such as TCF3. ID1 binds preferentially to TCF3 but does not interact efficiently with TWIST1 so ID1 levels control the amount of TCF3 available to dimerize with TWIST and thus determine the type of dimer formed.

The protein localises to the nucleus. Its function is as follows. Acts as a transcriptional regulator. Inhibits myogenesis by sequestrating E proteins, inhibiting trans-activation by MEF2, and inhibiting DNA-binding by MYOD1 through physical interaction. This interaction probably involves the basic domains of both proteins. Also represses expression of pro-inflammatory cytokines such as TNFA and IL1B. Regulates cranial suture patterning and fusion. Activates transcription as a heterodimer with E proteins. Regulates gene expression differentially, depending on dimer composition. Homodimers induce expression of FGFR2 and POSTN while heterodimers repress FGFR2 and POSTN expression and induce THBS1 expression. Heterodimerization is also required for osteoblast differentiation. Represses the activity of the circadian transcriptional activator: NPAS2-BMAL1 heterodimer. This chain is Twist-related protein 1 (TWIST1), found in Pan troglodytes (Chimpanzee).